A 692-amino-acid polypeptide reads, in one-letter code: Elongation factor G (692 aa).

Residues lysine 8 to valine 283 enclose the tr-type G domain. GTP-binding positions include alanine 17–threonine 24, aspartate 81–histidine 85, and asparagine 135–aspartate 138.

This sequence belongs to the TRAFAC class translation factor GTPase superfamily. Classic translation factor GTPase family. EF-G/EF-2 subfamily.

The protein localises to the cytoplasm. Its function is as follows. Catalyzes the GTP-dependent ribosomal translocation step during translation elongation. During this step, the ribosome changes from the pre-translocational (PRE) to the post-translocational (POST) state as the newly formed A-site-bound peptidyl-tRNA and P-site-bound deacylated tRNA move to the P and E sites, respectively. Catalyzes the coordinated movement of the two tRNA molecules, the mRNA and conformational changes in the ribosome. This is Elongation factor G from Exiguobacterium sibiricum (strain DSM 17290 / CCUG 55495 / CIP 109462 / JCM 13490 / 255-15).